A 352-amino-acid chain; its full sequence is Endophilin-A1 (352 aa).

Positions 1 to 21 (MSVAGLKKQFHKATQKVSEKV) are membrane-binding amphipathic helix. Residues 1–27 (MSVAGLKKQFHKATQKVSEKVGGAEGT) are disordered. The segment at 1–125 (MSVAGLKKQF…EVGEAMRELS (125 aa)) is binds and tubulates liposomes. A BAR domain is found at 18–249 (SEKVGGAEGT…LEERIRQASS (232 aa)). A required for dimerization upon membrane association region spans residues 60 to 87 (PNPASRAKLSMINTMSKIRGQEKGPGYP). Residues 181-248 (EELRQALEKF…RLEERIRQAS (68 aa)) adopt a coiled-coil conformation. The span at 245–257 (RQASSQPRREYQP) shows a compositional bias: basic and acidic residues. Residues 245-289 (RQASSQPRREYQPKPRMSLEFPTGDSTQPNGGLSHTGTPKPSGVQ) form a disordered region. S262 bears the Phosphoserine mark. A compositionally biased stretch (polar residues) spans 268–283 (GDSTQPNGGLSHTGTP). The SH3 domain maps to 290-349 (MDQPCCRALYDFEPENEGELGFKEGDIITLTNQIDENWYEGMLHGHSGFFPINYVEILVA). Residue Y299 is modified to Phosphotyrosine.

Belongs to the endophilin family. As to quaternary structure, monomer; in cytoplasm. Homodimer; when associated with membranes. Interacts with OPHN1. Interacts with SYNJ1. Interacts with DNM1. Interacts with MAP4K3; the interaction appears to regulate MAP4K3-mediated JNK activation. Interacts with PDCD6IP. Interacts with ATXN2. Interacts with ADAM9 and ADAM15 cytoplasmic tails. Interacts with BIN2. Interacts with TMEM108. Interacts with ADGRB2. In terms of tissue distribution, brain, mostly in frontal cortex. Expressed at high level in fetal cerebellum.

The protein resides in the cytoplasm. Its subcellular location is the membrane. It localises to the early endosome. It is found in the presynapse. Functionally, implicated in synaptic vesicle endocytosis. May recruit other proteins to membranes with high curvature. Required for BDNF-dependent dendrite outgrowth. Cooperates with SH3GL2 to mediate BDNF-NTRK2 early endocytic trafficking and signaling from early endosomes. This Homo sapiens (Human) protein is Endophilin-A1 (SH3GL2).